The chain runs to 289 residues: ATP synthase gamma chain (289 aa).

The protein belongs to the ATPase gamma chain family. In terms of assembly, F-type ATPases have 2 components, CF(1) - the catalytic core - and CF(0) - the membrane proton channel. CF(1) has five subunits: alpha(3), beta(3), gamma(1), delta(1), epsilon(1). CF(0) has three main subunits: a, b and c.

Its subcellular location is the cell inner membrane. Its function is as follows. Produces ATP from ADP in the presence of a proton gradient across the membrane. The gamma chain is believed to be important in regulating ATPase activity and the flow of protons through the CF(0) complex. In Azoarcus sp. (strain BH72), this protein is ATP synthase gamma chain.